The following is a 142-amino-acid chain: MVSKADNSAKLVEGKAKPMGSFPHVKRAGDFLFVSGTSSRRPDNTFVGAEPDDTGRPRPNIELQTREVISNIRDILQSVGADLGDVVEVCSYLVNMNDFAAYNKVYAEFFDATGPARTTVAVHQLPHPQLVIEIKVVAYKPL.

The protein belongs to the 2-aminomuconate deaminase family. In terms of assembly, homotetramer.

The catalysed reaction is (2Z,4E)-2-aminomuconate + H2O = (3E)-2-oxohex-3-enedioate + NH4(+). With respect to regulation, slightly inhibited by Pb(2+), Hg(+) and Cu(2+). Its function is as follows. Involved in the modified meta-cleavage pathway for the 2-aminophenol catabolism. Only active toward 2-aminomuconic acid. This Pseudomonas sp protein is 2-aminomuconate deaminase (amnD).